Consider the following 283-residue polypeptide: Shikimate dehydrogenase (NADP(+)) (283 aa).

Residues 16 to 18 (SLS) and Thr63 each bind shikimate. Lys67 acts as the Proton acceptor in catalysis. Residue Asp79 coordinates NADP(+). Residues Asn88 and Asp103 each contribute to the shikimate site. Residues 128-132 (GAGGA), Ala223, and Gly243 contribute to the NADP(+) site.

Belongs to the shikimate dehydrogenase family. As to quaternary structure, homodimer.

The catalysed reaction is shikimate + NADP(+) = 3-dehydroshikimate + NADPH + H(+). The protein operates within metabolic intermediate biosynthesis; chorismate biosynthesis; chorismate from D-erythrose 4-phosphate and phosphoenolpyruvate: step 4/7. In terms of biological role, involved in the biosynthesis of the chorismate, which leads to the biosynthesis of aromatic amino acids. Catalyzes the reversible NADPH linked reduction of 3-dehydroshikimate (DHSA) to yield shikimate (SA). This chain is Shikimate dehydrogenase (NADP(+)), found in Xanthomonas oryzae pv. oryzae (strain MAFF 311018).